We begin with the raw amino-acid sequence, 692 residues long: Elongation factor G (692 aa).

In terms of domain architecture, tr-type G spans glutamate 8–threonine 282. GTP contacts are provided by residues alanine 17–threonine 24, aspartate 81–histidine 85, and asparagine 135–aspartate 138.

This sequence belongs to the TRAFAC class translation factor GTPase superfamily. Classic translation factor GTPase family. EF-G/EF-2 subfamily.

The protein resides in the cytoplasm. Functionally, catalyzes the GTP-dependent ribosomal translocation step during translation elongation. During this step, the ribosome changes from the pre-translocational (PRE) to the post-translocational (POST) state as the newly formed A-site-bound peptidyl-tRNA and P-site-bound deacylated tRNA move to the P and E sites, respectively. Catalyzes the coordinated movement of the two tRNA molecules, the mRNA and conformational changes in the ribosome. This Trichormus variabilis (strain ATCC 29413 / PCC 7937) (Anabaena variabilis) protein is Elongation factor G.